Here is a 132-residue protein sequence, read N- to C-terminus: UPF0299 membrane protein YohJ (132 aa).

A run of 4 helical transmembrane segments spans residues 7 to 27, 31 to 51, 63 to 83, and 93 to 113; these read IIWQ…AGIF, LLPV…VLLA, GCYV…VGVM, and FGPV…VVSW.

The protein belongs to the UPF0299 family.

It localises to the cell inner membrane. The chain is UPF0299 membrane protein YohJ from Shigella boydii serotype 4 (strain Sb227).